Consider the following 343-residue polypeptide: Trace amine-associated receptor 3 (343 aa).

Residues 1–35 (MDLIYIPEDLSSCPKFGNKSCPPTNRSFRVRMIMY) are Extracellular-facing. Residues Asn-18 and Asn-25 are each glycosylated (N-linked (GlcNAc...) asparagine). 2 disulfides stabilise this stretch: Cys-21–Cys-185 and Cys-104–Cys-189. The chain crosses the membrane as a helical span at residues 36–56 (LFMTGAMVITIFGNLVIIISI). Residues 57 to 68 (SHFKQLHSPTNF) lie on the Cytoplasmic side of the membrane. The chain crosses the membrane as a helical span at residues 69-89 (LILSMATTDFLLGFVIMPYSM). Residues 90 to 150 (VRSVESCWYF…TTMTVSMIKR (61 aa)) lie on the Extracellular side of the membrane. Residues 151-168 (LLAFCWAAPALFSFGLVL) form a helical membrane-spanning segment. The Cytoplasmic portion of the chain corresponds to 169 to 172 (SEAN). The tract at residues 173 to 186 (VSGMQSYEILVACF) is extracellular Loop 2 (ECL2). The helical transmembrane segment at 173–193 (VSGMQSYEILVACFNFCALTF) threads the bilayer. The Extracellular segment spans residues 194–198 (NKFWG). Residues 199–223 (TILFTTCFFTPGSIMVGIYGKIFIV) traverse the membrane as a helical segment. Residues 224-257 (SRRHARALSDMPANTKGAVGKNLSKKKDRKAAKT) lie on the Cytoplasmic side of the membrane. The helical transmembrane segment at 258–278 (LGIVMGVFLACWLPCFLAVLI) threads the bilayer. Over 279–287 (DPYLDYSTP) the chain is Extracellular. A helical membrane pass occupies residues 288–308 (IIVLDLLVWLGYFNSTCNPLI). The Cytoplasmic segment spans residues 309–343 (HGFFYPWFRKALQFIVSGKIFRSNSDTANLFPEAH).

The protein belongs to the G-protein coupled receptor 1 family. In terms of tissue distribution, specifically expressed in neurons of the olfactory epithelium.

The protein resides in the cell membrane. Functionally, olfactory receptor activated by several primary trace amines, including isoamylamine. Activated by isoamylamine and cyclohexylamine, but not to the corresponding alcohols, isoamylalcohol and cyclohexanol. This receptor is probably mediated by the G(s)-class of G-proteins which activate adenylate cyclase. The chain is Trace amine-associated receptor 3 from Mus musculus (Mouse).